The sequence spans 117 residues: Large ribosomal subunit protein bL20 (117 aa).

It belongs to the bacterial ribosomal protein bL20 family.

Its function is as follows. Binds directly to 23S ribosomal RNA and is necessary for the in vitro assembly process of the 50S ribosomal subunit. It is not involved in the protein synthesizing functions of that subunit. In Maridesulfovibrio salexigens (strain ATCC 14822 / DSM 2638 / NCIMB 8403 / VKM B-1763) (Desulfovibrio salexigens), this protein is Large ribosomal subunit protein bL20.